Reading from the N-terminus, the 136-residue chain is Holo-[acyl-carrier-protein] synthase (136 aa).

Positions 8 and 57 each coordinate Mg(2+).

The protein belongs to the P-Pant transferase superfamily. AcpS family. Mg(2+) serves as cofactor.

It is found in the cytoplasm. It carries out the reaction apo-[ACP] + CoA = holo-[ACP] + adenosine 3',5'-bisphosphate + H(+). In terms of biological role, transfers the 4'-phosphopantetheine moiety from coenzyme A to a Ser of acyl-carrier-protein. In Methylobacterium radiotolerans (strain ATCC 27329 / DSM 1819 / JCM 2831 / NBRC 15690 / NCIMB 10815 / 0-1), this protein is Holo-[acyl-carrier-protein] synthase.